We begin with the raw amino-acid sequence, 374 residues long: Large ribosomal subunit protein uL4 (374 aa).

The segment at 336 to 355 (EKAMAKGMQNKKNREARHAA) is disordered.

This sequence belongs to the universal ribosomal protein uL4 family.

This Trypanosoma brucei brucei protein is Large ribosomal subunit protein uL4 (RPL4).